The primary structure comprises 296 residues: 4-hydroxybenzoate octaprenyltransferase (296 aa).

8 helical membrane-spanning segments follow: residues 29–49 (IGIYLLLWPTLWSLWIAADGV), 55–75 (LLIFVLGVILMRAAGCVINDF), 102–122 (AWITFAVLVALSFGLVLLTNA), 146–166 (YYPQVVLGAAYSWGILMAFTA), 169–189 (GELPASAWLLFLANVLWTVAY), 219–239 (LIIGSLQGLTLLLLALAGSRF), 241–261 (LGLYFYLGLAVAAACFVWEAW), and 275–295 (FLHNHWAGLAIFLGTVADYAL).

Belongs to the UbiA prenyltransferase family. Mg(2+) is required as a cofactor.

The protein localises to the cell inner membrane. The enzyme catalyses all-trans-octaprenyl diphosphate + 4-hydroxybenzoate = 4-hydroxy-3-(all-trans-octaprenyl)benzoate + diphosphate. The protein operates within cofactor biosynthesis; ubiquinone biosynthesis. In terms of biological role, catalyzes the prenylation of para-hydroxybenzoate (PHB) with an all-trans polyprenyl group. Mediates the second step in the final reaction sequence of ubiquinone-8 (UQ-8) biosynthesis, which is the condensation of the polyisoprenoid side chain with PHB, generating the first membrane-bound Q intermediate 3-octaprenyl-4-hydroxybenzoate. In Pseudomonas aeruginosa (strain UCBPP-PA14), this protein is 4-hydroxybenzoate octaprenyltransferase.